A 557-amino-acid chain; its full sequence is Urocanate hydratase (557 aa).

NAD(+) contacts are provided by residues 48-49 (GG), Gln-126, 178-180 (GMG), Asp-198, Arg-203, 244-245 (NA), 265-269 (QTSAH), 274-275 (YL), and Tyr-323. Residue Cys-411 is part of the active site. NAD(+) is bound at residue Gly-493.

This sequence belongs to the urocanase family. NAD(+) is required as a cofactor.

It localises to the cytoplasm. It carries out the reaction 4-imidazolone-5-propanoate = trans-urocanate + H2O. It participates in amino-acid degradation; L-histidine degradation into L-glutamate; N-formimidoyl-L-glutamate from L-histidine: step 2/3. Functionally, catalyzes the conversion of urocanate to 4-imidazolone-5-propionate. In Beutenbergia cavernae (strain ATCC BAA-8 / DSM 12333 / CCUG 43141 / JCM 11478 / NBRC 16432 / NCIMB 13614 / HKI 0122), this protein is Urocanate hydratase.